The sequence spans 280 residues: Nitrogenase iron-iron protein alpha chain (280 aa).

3 residues coordinate [8Fe-7S] cluster: C5, C31, and C94. C213 is a [8Fe-9S-C-homocitryl] cluster binding site.

It belongs to the NifD/NifK/NifE/NifN family. In terms of assembly, hexamer of two alpha, two beta, and two delta chains. [8Fe-7S] cluster is required as a cofactor. Requires [8Fe-9S-C-homocitryl] cluster as cofactor.

The enzyme catalyses N2 + 8 reduced [2Fe-2S]-[ferredoxin] + 16 ATP + 16 H2O = H2 + 8 oxidized [2Fe-2S]-[ferredoxin] + 2 NH4(+) + 16 ADP + 16 phosphate + 6 H(+). Functionally, this iron-iron protein is part of the nitrogenase complex that catalyzes the key enzymatic reactions in nitrogen fixation. Other nitrogenase complexes utilize a molybdenum-iron protein or a vanadium-iron protein. This chain is Nitrogenase iron-iron protein alpha chain (anfD), found in Heliomicrobium gestii (Heliobacterium gestii).